A 246-amino-acid chain; its full sequence is Probable transcriptional regulatory protein HD_0596 (246 aa).

Belongs to the TACO1 family.

It is found in the cytoplasm. The sequence is that of Probable transcriptional regulatory protein HD_0596 from Haemophilus ducreyi (strain 35000HP / ATCC 700724).